The primary structure comprises 340 residues: Toxin coregulated pilus biosynthesis protein E (340 aa).

Helical transmembrane passes span 108–131 (AISS…GYSV), 146–161 (WPGV…FSLY), and 312–333 (NISL…FSLV).

Belongs to the GSP F family.

Its subcellular location is the cell inner membrane. Probably involved in cholera toxin receptor (GM1) interaction in order to bring the cells within close proximity of the ganglioside for efficient toxin delivery. This Vibrio cholerae serotype O1 (strain ATCC 39315 / El Tor Inaba N16961) protein is Toxin coregulated pilus biosynthesis protein E (tcpE).